Reading from the N-terminus, the 365-residue chain is Patr class I histocompatibility antigen, A-108 alpha chain (365 aa).

The signal sequence occupies residues Met-1–Ala-24. Positions Gly-25–Asp-114 are alpha-1. Residues Gly-25–Ile-308 lie on the Extracellular side of the membrane. The N-linked (GlcNAc...) asparagine glycan is linked to Asn-110. The segment at Gly-115 to Thr-206 is alpha-2. Disulfide bonds link Cys-125–Cys-188 and Cys-227–Cys-283. The segment at Asp-207 to Trp-298 is alpha-3. The Ig-like C1-type domain maps to Pro-209–Thr-295. A connecting peptide region spans residues Glu-299–Ile-308. A helical membrane pass occupies residues Val-309–Trp-332. Residues Arg-333–Val-365 lie on the Cytoplasmic side of the membrane. A disordered region spans residues Arg-339–Leu-360. The residue at position 343 (Ser-343) is a Phosphoserine. Residue Tyr-344 is modified to Phosphotyrosine. Low complexity predominate over residues Gln-346–Ser-359. Residues Ser-349, Ser-350, Ser-352, Ser-356, and Ser-359 each carry the phosphoserine modification.

It belongs to the MHC class I family. In terms of assembly, heterodimer of an alpha chain and a beta chain (beta-2-microglobulin).

Its subcellular location is the membrane. Functionally, involved in the presentation of foreign antigens to the immune system. This chain is Patr class I histocompatibility antigen, A-108 alpha chain (Patr-A), found in Pan troglodytes (Chimpanzee).